We begin with the raw amino-acid sequence, 379 residues long: Gonadotropin-releasing hormone II receptor (379 aa).

Over 1-40 the chain is Extracellular; it reads MSAGNGTPWGSAVGEEAWAGSGVAVEGSELPTFSTAAKVR. Residues 41-60 traverse the membrane as a helical segment; that stretch reads VGVTIVLFVSSAGGNLAVLW. Residues 61-76 are Cytoplasmic-facing; sequence SVTRPQPSQLRPSPVR. The helical transmembrane segment at 77 to 96 threads the bilayer; that stretch reads TLFAHLAAADLLVTFVVMPL. Topologically, residues 97–114 are extracellular; that stretch reads DATWNITVQWLAGDIACR. N-linked (GlcNAc...) asparagine glycosylation occurs at Asn101. An intrachain disulfide couples Cys113 to Cys188. Residues 115-136 form a helical membrane-spanning segment; the sequence is TLMFLKLMAMYSAAFLPVVIGL. Topologically, residues 137–160 are cytoplasmic; it reads DRQAAVLNPLGSRSGVRKLLGAAW. Residues 161-178 traverse the membrane as a helical segment; that stretch reads GLSFLLALPQLFLFHTVH. Residues 179–204 are Extracellular-facing; the sequence is RAGPVPFTQCVTKGSFKARWQETTYN. The helical transmembrane segment at 205 to 224 threads the bilayer; sequence LFTFCCLFLLPLIAMAICYS. The Cytoplasmic portion of the chain corresponds to 225-278; sequence RIVLSVSSPQTRKGSHAPAGEFALRRSFDNRPRVCLRALRLALLILLTFILCWT. The chain crosses the membrane as a helical span at residues 279–297; sequence PYYLLGLWYWFSPTMLTEV. Topologically, residues 298–303 are extracellular; that stretch reads PPSLSH. A helical transmembrane segment spans residues 304–323; it reads ILFLFGLLNAPLDPLLYGAF. Residues 324-379 are Cytoplasmic-facing; it reads TFGCRRGHQELSIDSSKEGSGRMLQQEIHALRQQEVQKTVTSRSAGETKGISITSI.

This sequence belongs to the G-protein coupled receptor 1 family. In terms of processing, phosphorylated on the C-terminal cytoplasmic tail.

It localises to the cell membrane. Functionally, receptor for gonadotropin releasing hormone II (GnRH II). This receptor mediates its action by association with G proteins that activate a phosphatidylinositol-calcium second messenger system. The chain is Gonadotropin-releasing hormone II receptor (GNRHR2) from Chlorocebus aethiops (Green monkey).